The primary structure comprises 272 residues: Undecaprenyl-diphosphatase (272 aa).

8 helical membrane passes run 1 to 21 (MSTL…FLPI), 39 to 59 (QGLA…MMYF), 91 to 111 (WWIL…KDFI), 117 to 137 (SALV…FADI), 151 to 171 (LGLK…IPGT), 196 to 216 (FLLS…KLIL), 228 to 248 (LGSL…LILL), and 251 to 271 (LGMM…LWFI).

It belongs to the UppP family.

The protein localises to the cell inner membrane. The enzyme catalyses di-trans,octa-cis-undecaprenyl diphosphate + H2O = di-trans,octa-cis-undecaprenyl phosphate + phosphate + H(+). Catalyzes the dephosphorylation of undecaprenyl diphosphate (UPP). Confers resistance to bacitracin. In Colwellia psychrerythraea (strain 34H / ATCC BAA-681) (Vibrio psychroerythus), this protein is Undecaprenyl-diphosphatase.